The following is a 213-amino-acid chain: Holliday junction resolvase RecU (213 aa).

Positions 99, 101, 114, and 133 each coordinate Mg(2+).

The protein belongs to the RecU family. Requires Mg(2+) as cofactor.

It localises to the cytoplasm. It carries out the reaction Endonucleolytic cleavage at a junction such as a reciprocal single-stranded crossover between two homologous DNA duplexes (Holliday junction).. Functionally, endonuclease that resolves Holliday junction intermediates in genetic recombination. Cleaves mobile four-strand junctions by introducing symmetrical nicks in paired strands. Promotes annealing of linear ssDNA with homologous dsDNA. Required for DNA repair, homologous recombination and chromosome segregation. The chain is Holliday junction resolvase RecU from Lactococcus lactis subsp. lactis (strain IL1403) (Streptococcus lactis).